Here is a 93-residue protein sequence, read N- to C-terminus: Large ribosomal subunit protein uL23cz/uL23cy (93 aa).

This sequence belongs to the universal ribosomal protein uL23 family. As to quaternary structure, part of the 50S ribosomal subunit.

It is found in the plastid. The protein localises to the chloroplast. Binds to 23S rRNA. The protein is Large ribosomal subunit protein uL23cz/uL23cy (rpl23-A) of Nandina domestica (Heavenly bamboo).